The sequence spans 870 residues: Dynamin-2 (870 aa).

One can recognise a Dynamin-type G domain in the interval 28 to 294; sequence HLDLPQIAVV…LTNHIRESLP (267 aa). The tract at residues 38–45 is G1 motif; it reads GGQSAGKS. GDP-binding residues include Ser-41, Gly-43, Lys-44, Ser-45, Ser-46, Arg-59, and Gly-60. Positions 64–66 are G2 motif; that stretch reads VTR. A G3 motif region spans residues 136-139; sequence DLPG. The segment at 205 to 208 is G4 motif; the sequence is TKLD. Lys-206, Asp-208, and Asp-211 together coordinate GDP. Phosphotyrosine; by SRC is present on Tyr-231. The segment at 235-238 is G5 motif; sequence VNRS. 3 residues coordinate GDP: Asn-236, Arg-237, and Gln-239. Residue Lys-299 is modified to N6-acetyllysine. The 107-residue stretch at 519–625 folds into the PH domain; the sequence is LVIRRGWLTI…WKASFLRAGV (107 aa). Tyr-597 is subject to Phosphotyrosine; by SRC. Position 598 is an N6-acetyllysine (Lys-598). One can recognise a GED domain in the interval 653–744; it reads VETIRNLVDS…IIGDISTSTV (92 aa). The segment at 741 to 870 is disordered; sequence TSTVSTPVPP…IRPAEPSLLD (130 aa). Thr-755 bears the Phosphothreonine mark. The span at 756-767 shows a compositional bias: polar residues; that stretch reads WLQSASSHSPTP. Residue Ser-764 is modified to Phosphoserine; by CDK1. Residues 796 to 806 are compositionally biased toward low complexity; it reads VPVGAAASFSA. Pro residues predominate over residues 826 to 855; the sequence is PAPPQIPSRPVRIPPGIPPGVPSRRPPAAP. Ser-848 carries the phosphoserine; by GSK3-alpha modification.

This sequence belongs to the TRAFAC class dynamin-like GTPase superfamily. Dynamin/Fzo/YdjA family. As to quaternary structure, oligomerizes into a helical polymer that self-assembles around the vesicle membrane, when associated to the menbrane through lipid binding. Interacts with SHANK1 and SHANK2. Interacts with SNX9. Interacts (via C-terminal proline-rich domain (PRD)) with SNX18 (via SH3 domain); this interaction regulates ATG9A and ATG16L1 trafficking from recycling endosomes to sites of autophagosome formation. Interacts with SNX33 (via SH3 domain). Interacts with MYO1E (via SH3 domain). Interacts with PSTPIP1 (via SH3 domain). Interacts with CTNND2. Interacts (via C-terminal proline-rich domain (PRD)) with BIN1 (via SH3 domain); this interaction allows the recruitment of DNM2 to the membrane tubules and inhibits self-assembly-stimulated GTPase activity on the membrane. Interacts with GABARAP, GABARAPL1 and GABARAPL2. Interacts with MAP1LC3B (the lipidate and non-lipidated LC3 form); this interaction mediates recycling endosome scission leading to autophagosome release. Interacts with ITSN1. Interacts (via C-terminal proline-rich domain (PRD)) with SH3BP4 (via SH3 domain); this interaction controls the GTPase activity and is prevented by EGFR-induced tyrosine phosphorylation of either DNM2 or SH3BP4. May interact with PIK3C3. May be a component of a complex composed of RAB5A (in GDP-bound form), DYN2 and PIK3C3. Interacts with SDC4; this interaction is markedly enhanced at focal ahesion site upon induction of focal adhesions and stress-fiber formation. Interacts with ACTN1. Interacts with CTTN; this interaction stimulates the intrinsic GTPase activity of DNM2 and stabilizes the association of DNM2 and actin filaments; in addition this interaction is stimulated by ligand binding to the receptor, leading to the recruitment of the DNM2-CTTN complex to the sequestered receptor-ligand complex to its internalization. Interacts with NOSTRIN (via SH3 domain); this interaction allows the recruitment of NOS3 to dynamin-positive structures. Interacts with TUBG1; this interaction may participate in centrosome cohesion. In terms of processing, phosphorylation at Ser-848 by GSK3-alpha relieves the inhibition of BIN1 and promotes endocytosis. Phosphorylation at Ser-764 by CDK1 is greatly increased upon mitotic entry. It regulates cytokinesis downstream of calcineurin, and does not affect clathrin-mediated endocytosis. Dephosphorylated by calcineurin/PP2 during cytokinesis in a Ca(2+)- and calmodulin-dependent manner. Phosphorylated on tyrosine residues by EGFR and after activation of SRC. Widely expressed. Expressed in skeletal muscle and the peripheral nerve.

The protein resides in the cytoplasm. Its subcellular location is the cytoskeleton. The protein localises to the cytoplasmic vesicle. It is found in the clathrin-coated vesicle. It localises to the cell projection. The protein resides in the uropodium. Its subcellular location is the endosome. The protein localises to the microtubule organizing center. It is found in the centrosome. It localises to the centriole. The protein resides in the recycling endosome. Its subcellular location is the phagocytic cup. The protein localises to the phagosome membrane. It is found in the podosome. It localises to the cell junction. The protein resides in the postsynaptic density. Its subcellular location is the synapse. The protein localises to the synaptosome. It is found in the midbody. It localises to the membrane. The protein resides in the clathrin-coated pit. The enzyme catalyses GTP + H2O = GDP + phosphate + H(+). Its function is as follows. Catalyzes the hydrolysis of GTP and utilizes this energy to mediate vesicle scission at plasma membrane during endocytosis and filament remodeling at many actin structures during organization of the actin cytoskeleton. Plays an important role in vesicular trafficking processes, namely clathrin-mediated endocytosis (CME), exocytic and clathrin-coated vesicle from the trans-Golgi network, and PDGF stimulated macropinocytosis. During vesicular trafficking process, associates to the membrane, through lipid binding, and self-assembles into ring-like structure through oligomerization to form a helical polymer around the vesicle membrane and leading to vesicle scission. Plays a role in organization of the actin cytoskeleton by mediating arrangement of stress fibers and actin bundles in podocytes. During organization of the actin cytoskeleton, self-assembles into ring-like structure that directly bundles actin filaments to form typical membrane tubules decorated with dynamin spiral polymers. Self-assembly increases GTPase activity and the GTP hydrolysis causes the rapid depolymerization of dynamin spiral polymers, and results in dispersion of actin bundles. Remodels, through its interaction with CTTN, bundled actin filaments in a GTPase-dependent manner and plays a role in orchestrating the global actomyosin cytoskeleton. The interaction with CTTN stabilizes the interaction of DNM2 and actin filaments and stimulates the intrinsic GTPase activity that results in actin filament-barbed ends and increases the sensitivity of filaments in bundles to the actin depolymerizing factor, CFL1. Plays a role in the autophagy process, by participating in the formation of ATG9A vesicles destined for the autophagosomes through its interaction with SNX18, by mediating recycling endosome scission leading to autophagosome release through MAP1LC3B interaction. Also regulates maturation of apoptotic cell corpse-containing phagosomes by recruiting PIK3C3 to the phagosome membrane. Also plays a role in cytokinesis. May participate in centrosome cohesion through its interaction with TUBG1. Plays a role in the regulation of neuron morphology, axon growth and formation of neuronal growth cones. Involved in membrane tubulation. This Homo sapiens (Human) protein is Dynamin-2.